Consider the following 156-residue polypeptide: Envelope glycoprotein L (156 aa).

The signal sequence occupies residues 1–16 (MSPLVAVLVFFSAALG). Residues 21-141 (GVAGNPHGLD…KELGEVAVHK (121 aa)) are interaction with gH. In terms of domain architecture, gL alphaherpesvirus-type spans 50–156 (ELEWDDEDHP…LRYNGGPPAE (107 aa)). The cysteines at positions 71 and 95 are disulfide-linked.

It belongs to the herpesviridae glycoprotein L (gL) family. Alphaherpesvirinae gL subfamily. In terms of assembly, interacts with glycoprotein H (gH); this interaction is necessary for the correct processing and cell surface expression of gH. The heterodimer gH/gL seems to interact with gB trimers during fusion. O-glycosylated, and sialylated.

The protein resides in the virion membrane. The protein localises to the host cell membrane. Its subcellular location is the host Golgi apparatus. It localises to the host trans-Golgi network. Functionally, the heterodimer glycoprotein H-glycoprotein L is required for the fusion of viral and plasma membranes leading to virus entry into the host cell. Acts as a functional inhibitor of gH and maintains gH in an inhibited form. Upon binding to host integrins, gL dissociates from gH leading to activation of the viral fusion glycoproteins gB and gH. The polypeptide is Envelope glycoprotein L (Sus scrofa (Pig)).